Reading from the N-terminus, the 208-residue chain is Small ribosomal subunit protein uS5 (208 aa).

Positions 1–15 (MTDSNNQSPNKKTSG) are enriched in polar residues. Residues 1 to 54 (MTDSNNQSPNKKTSGSSSAPPAADGRQENRRSRGEKRGGRRDRRGQERDSEWQE) form a disordered region. Basic and acidic residues-rich tracts occupy residues 25-37 (GRQENRRSRGEKR) and 44-54 (RGQERDSEWQE). An S5 DRBM domain is found at 52-115 (WQERVVQIRR…ADGKKHLVRV (64 aa)).

This sequence belongs to the universal ribosomal protein uS5 family. As to quaternary structure, part of the 30S ribosomal subunit. Contacts proteins S4 and S8.

Functionally, with S4 and S12 plays an important role in translational accuracy. In terms of biological role, located at the back of the 30S subunit body where it stabilizes the conformation of the head with respect to the body. In Prochlorococcus marinus (strain NATL2A), this protein is Small ribosomal subunit protein uS5.